The following is a 219-amino-acid chain: uncharacterized protein (219 aa).

The helical transmembrane segment at 13–32 (VFGLFLFSLIFFGLLSLATF) threads the bilayer.

Its subcellular location is the membrane. This is an uncharacterized protein from Aquifex aeolicus (strain VF5).